Reading from the N-terminus, the 321-residue chain is Protein stand still (321 aa).

Coiled coils occupy residues 74 to 103 and 147 to 167; these read KLHE…RKKA and KQEQ…KANL. The segment covering 146-162 has biased composition (basic and acidic residues); it reads HKQEQEGATRKLEDSTS. Disordered stretches follow at residues 146 to 166 and 227 to 248; these read HKQE…DKAN and QVPP…MEDV. The segment covering 235-244 has biased composition (low complexity); it reads SKSSGSLASS. Residues 272–292 adopt a coiled-coil conformation; it reads QRDVLQRLERSMAQISQELHC.

Germ cells specific. Expressed in all germ cells. During the first instar larvae, it is expressed in all germ cells of both sexes. In third instar larvae, it decreases in male germ cells while it remains in female germ cells. In adult ovary, it is expressed in cells of the germarium, including the stem cells. In the early previtellogenic stages, it is highly expressed in the nurse cells. During vitellogenesis, it is not translocated into the maturing egg. In testes, it is only expressed during some steps of male germline differentiation. At the apex testis, it is expressed at low level in stem cells and dividing spermatogonia, while in newly formed 16-cell cysts of primary spermatocytes, it is transiently but strongly expressed before vanishing during spermatocyte growth phase.

It localises to the nucleus. Essential in the female germline for proper survival, sex determination and differentiation. Participates in the transcriptional activation of Otu. Does not regulate the expression of Ovo. The polypeptide is Protein stand still (stil) (Drosophila melanogaster (Fruit fly)).